The following is a 415-amino-acid chain: DNA primase DnaG (415 aa).

One can recognise a Toprim domain in the interval 171–250 (DAIIIVEGRA…AFSPRGKSVE (80 aa)). Positions 177, 219, and 221 each coordinate Mg(2+). A disordered region spans residues 280-323 (ELPGDLGGRPARTAPAHDEGGNSDTTGKQAVSQKRIRDGTSKVP). The segment covering 301-311 (NSDTTGKQAVS) has biased composition (polar residues).

The protein belongs to the archaeal DnaG primase family. Forms a ternary complex with MCM helicase and DNA. Mg(2+) serves as cofactor.

It catalyses the reaction ssDNA + n NTP = ssDNA/pppN(pN)n-1 hybrid + (n-1) diphosphate.. Functionally, RNA polymerase that catalyzes the synthesis of short RNA molecules used as primers for DNA polymerase during DNA replication. This Methanoregula boonei (strain DSM 21154 / JCM 14090 / 6A8) protein is DNA primase DnaG.